The sequence spans 210 residues: Troponin I, cardiac muscle (210 aa).

The tract at residues 1-43 (MADGSSDAAREPRPAPAPIRRRSSNYRAYATEPHAKKKSKISA) is disordered. A2 carries the post-translational modification N-acetylalanine. Phosphoserine occurs at positions 5 and 6. 2 positions are modified to phosphoserine; by PKA and PKD/PRKD1: S23 and S24. The residue at position 26 (Y26) is a Phosphotyrosine. The residue at position 31 (T31) is a Phosphothreonine; by STK4/MST1. Positions 32 to 79 (EPHAKKKSKISASRKLQLKTLLLQIAKQELEREAEERRGEKGRALSTR) are involved in binding TNC. Residues S42 and S44 each carry the phosphoserine; by PKC/PRKCE modification. At T51 the chain carries Phosphothreonine; by STK4/MST1. Phosphoserine is present on S77. T78 carries the phosphothreonine modification. T129 and T143 each carry phosphothreonine; by STK4/MST1. Positions 129–149 (TQKIFDLRGKFKRPTLRRVRI) are involved in binding TNC and actin. S150 carries the post-translational modification Phosphoserine; by PAK3. Residue S166 is modified to Phosphoserine. Phosphothreonine is present on T181. The residue at position 199 (S199) is a Phosphoserine.

This sequence belongs to the troponin I family. In terms of assembly, binds to actin and tropomyosin. Interacts with TRIM63. Interacts with STK4/MST1. Post-translationally, phosphorylated at Ser-42 and Ser-44 by PRKCE; phosphorylation increases myocardium contractile dysfunction. Phosphorylated at Ser-23 and Ser-24 by PRKD1; phosphorylation reduces myofilament calcium sensitivity. Phosphorylated preferentially at Thr-31. Phosphorylation by STK4/MST1 alters its binding affinity to TNNC1 (cardiac Tn-C) and TNNT2 (cardiac Tn-T).

In terms of biological role, troponin I is the inhibitory subunit of troponin, the thin filament regulatory complex which confers calcium-sensitivity to striated muscle actomyosin ATPase activity. The polypeptide is Troponin I, cardiac muscle (TNNI3) (Homo sapiens (Human)).